Here is a 384-residue protein sequence, read N- to C-terminus: Erythronate-4-phosphate dehydrogenase (384 aa).

Residues Ser-45 and Thr-66 each coordinate substrate. The NAD(+) site is built by Asp-147 and Thr-177. Arg-210 is an active-site residue. NAD(+) is bound at residue Asp-234. Glu-239 is a catalytic residue. The active-site Proton donor is the His-256. Residue Gly-259 participates in NAD(+) binding. Tyr-260 contacts substrate.

The protein belongs to the D-isomer specific 2-hydroxyacid dehydrogenase family. PdxB subfamily. Homodimer.

Its subcellular location is the cytoplasm. It catalyses the reaction 4-phospho-D-erythronate + NAD(+) = (R)-3-hydroxy-2-oxo-4-phosphooxybutanoate + NADH + H(+). Its pathway is cofactor biosynthesis; pyridoxine 5'-phosphate biosynthesis; pyridoxine 5'-phosphate from D-erythrose 4-phosphate: step 2/5. Catalyzes the oxidation of erythronate-4-phosphate to 3-hydroxy-2-oxo-4-phosphonooxybutanoate. The protein is Erythronate-4-phosphate dehydrogenase of Marinobacter nauticus (strain ATCC 700491 / DSM 11845 / VT8) (Marinobacter aquaeolei).